A 715-amino-acid chain; its full sequence is Polyphosphate kinase (715 aa).

Asn60 contacts ATP. Mg(2+) contacts are provided by Arg380 and Arg410. His440 serves as the catalytic Phosphohistidine intermediate. ATP-binding residues include Tyr473, Arg569, and His597.

It belongs to the polyphosphate kinase 1 (PPK1) family. It depends on Mg(2+) as a cofactor. An intermediate of this reaction is the autophosphorylated ppk in which a phosphate is covalently linked to a histidine residue through a N-P bond.

The enzyme catalyses [phosphate](n) + ATP = [phosphate](n+1) + ADP. In terms of biological role, catalyzes the reversible transfer of the terminal phosphate of ATP to form a long-chain polyphosphate (polyP). This chain is Polyphosphate kinase, found in Erythrobacter litoralis (strain HTCC2594).